The primary structure comprises 400 residues: Nicotinate phosphoribosyltransferase (400 aa).

Phosphohistidine; by autocatalysis is present on His-220.

The protein belongs to the NAPRTase family. In terms of processing, transiently phosphorylated on a His residue during the reaction cycle. Phosphorylation strongly increases the affinity for substrates and increases the rate of nicotinate D-ribonucleotide production. Dephosphorylation regenerates the low-affinity form of the enzyme, leading to product release.

It carries out the reaction nicotinate + 5-phospho-alpha-D-ribose 1-diphosphate + ATP + H2O = nicotinate beta-D-ribonucleotide + ADP + phosphate + diphosphate. It functions in the pathway cofactor biosynthesis; NAD(+) biosynthesis; nicotinate D-ribonucleotide from nicotinate: step 1/1. Functionally, catalyzes the synthesis of beta-nicotinate D-ribonucleotide from nicotinate and 5-phospho-D-ribose 1-phosphate at the expense of ATP. This Salmonella typhi protein is Nicotinate phosphoribosyltransferase.